The sequence spans 502 residues: UDP-N-acetylmuramoylalanine--D-glutamate ligase (502 aa).

136–142 provides a ligand contact to ATP; sequence GTNGKTT.

The protein belongs to the MurCDEF family.

Its subcellular location is the cytoplasm. It catalyses the reaction UDP-N-acetyl-alpha-D-muramoyl-L-alanine + D-glutamate + ATP = UDP-N-acetyl-alpha-D-muramoyl-L-alanyl-D-glutamate + ADP + phosphate + H(+). The protein operates within cell wall biogenesis; peptidoglycan biosynthesis. Functionally, cell wall formation. Catalyzes the addition of glutamate to the nucleotide precursor UDP-N-acetylmuramoyl-L-alanine (UMA). In Corynebacterium jeikeium (strain K411), this protein is UDP-N-acetylmuramoylalanine--D-glutamate ligase.